A 130-amino-acid chain; its full sequence is Small ribosomal subunit protein uS8 (130 aa).

It belongs to the universal ribosomal protein uS8 family. As to quaternary structure, part of the 30S ribosomal subunit. Contacts proteins S5 and S12.

One of the primary rRNA binding proteins, it binds directly to 16S rRNA central domain where it helps coordinate assembly of the platform of the 30S subunit. The polypeptide is Small ribosomal subunit protein uS8 (Moorella thermoacetica (strain ATCC 39073 / JCM 9320)).